Reading from the N-terminus, the 235-residue chain is 2-C-methyl-D-erythritol 4-phosphate cytidylyltransferase (235 aa).

This sequence belongs to the IspD/TarI cytidylyltransferase family. IspD subfamily.

The enzyme catalyses 2-C-methyl-D-erythritol 4-phosphate + CTP + H(+) = 4-CDP-2-C-methyl-D-erythritol + diphosphate. It participates in isoprenoid biosynthesis; isopentenyl diphosphate biosynthesis via DXP pathway; isopentenyl diphosphate from 1-deoxy-D-xylulose 5-phosphate: step 2/6. Its function is as follows. Catalyzes the formation of 4-diphosphocytidyl-2-C-methyl-D-erythritol from CTP and 2-C-methyl-D-erythritol 4-phosphate (MEP). In Pseudomonas entomophila (strain L48), this protein is 2-C-methyl-D-erythritol 4-phosphate cytidylyltransferase.